A 719-amino-acid polypeptide reads, in one-letter code: Catalase-3 (719 aa).

A signal peptide spans 1-18 (MRVNALLPLSGLIGTALA). Residues 19-30 (ACPFADPSALGR) constitute a propeptide that is removed on maturation. Residues His-102 and Asn-175 contribute to the active site. Tyr-389 is a heme binding site.

This sequence belongs to the catalase family. Requires heme as cofactor.

It catalyses the reaction 2 H2O2 = O2 + 2 H2O. Occurs in almost all aerobically respiring organisms and serves to protect cells from the toxic effects of hydrogen peroxide. This is Catalase-3 (cat-3) from Neurospora crassa (strain ATCC 24698 / 74-OR23-1A / CBS 708.71 / DSM 1257 / FGSC 987).